Here is a 333-residue protein sequence, read N- to C-terminus: Meiotic recombination protein rec24 (333 aa).

Belongs to the MEI4L family. Interacts with Rec7, as part of the meiotic recombination initiation complex.

The protein resides in the cytoplasm. It is found in the nucleus. In terms of biological role, required for correct meiotic chromosome segregation and recombination. Accessory protein required for Rec12 activity, which is involved in formation of the double-strand breaks (DSBs) that initiate meiotic recombination. The sequence is that of Meiotic recombination protein rec24 (rec24) from Schizosaccharomyces pombe (strain 972 / ATCC 24843) (Fission yeast).